A 947-amino-acid polypeptide reads, in one-letter code: Bifunctional glutamine synthetase adenylyltransferase/adenylyl-removing enzyme (947 aa).

The segment at 1-440 is adenylyl removase; it reads MTPLSSPLSQ…VFNELIGDDE (440 aa). The interval 450–947 is adenylyl transferase; it reads SEPWRDVWQD…ASWRKWLVAV (498 aa).

This sequence belongs to the GlnE family. Mg(2+) is required as a cofactor.

It catalyses the reaction [glutamine synthetase]-O(4)-(5'-adenylyl)-L-tyrosine + phosphate = [glutamine synthetase]-L-tyrosine + ADP. It carries out the reaction [glutamine synthetase]-L-tyrosine + ATP = [glutamine synthetase]-O(4)-(5'-adenylyl)-L-tyrosine + diphosphate. Functionally, involved in the regulation of glutamine synthetase GlnA, a key enzyme in the process to assimilate ammonia. When cellular nitrogen levels are high, the C-terminal adenylyl transferase (AT) inactivates GlnA by covalent transfer of an adenylyl group from ATP to specific tyrosine residue of GlnA, thus reducing its activity. Conversely, when nitrogen levels are low, the N-terminal adenylyl removase (AR) activates GlnA by removing the adenylyl group by phosphorolysis, increasing its activity. The regulatory region of GlnE binds the signal transduction protein PII (GlnB) which indicates the nitrogen status of the cell. In Salmonella dublin (strain CT_02021853), this protein is Bifunctional glutamine synthetase adenylyltransferase/adenylyl-removing enzyme.